A 184-amino-acid polypeptide reads, in one-letter code: Nutrient stress-induced DNA-binding protein (184 aa).

This sequence belongs to the Dps family. Hexamer.

Involved in protection of chromosomal DNA from damage under nutrient-limited and oxidative stress conditions. Binds heme. The sequence is that of Nutrient stress-induced DNA-binding protein (dpsA) from Nostoc sp. (strain PCC 7120 / SAG 25.82 / UTEX 2576).